The primary structure comprises 101 residues: MSGSINKDPRDVIIAPVVSEKSYGLIDEGKYTFLVDPRSNKSEIKQAVERIFNVDVASVNTLNRSGKRRRTRFGWGQRKSTKRAIVTLKDGTIDIFGGPLA.

This sequence belongs to the universal ribosomal protein uL23 family. Part of the 50S ribosomal subunit. Contacts protein L29, and trigger factor when it is bound to the ribosome.

Functionally, one of the early assembly proteins it binds 23S rRNA. One of the proteins that surrounds the polypeptide exit tunnel on the outside of the ribosome. Forms the main docking site for trigger factor binding to the ribosome. The polypeptide is Large ribosomal subunit protein uL23 (Micrococcus luteus (strain ATCC 4698 / DSM 20030 / JCM 1464 / CCM 169 / CCUG 5858 / IAM 1056 / NBRC 3333 / NCIMB 9278 / NCTC 2665 / VKM Ac-2230) (Micrococcus lysodeikticus)).